We begin with the raw amino-acid sequence, 1001 residues long: MPSTNRAGSLKDPEIAELFFKEDPEKLFTDLREIGHGSFGAVYFARDVRTNEVVAIKKMSYSGKQSTEKWQDIIKEVKFLQRIKHPNSIEYKGCYLREHTAWLVMEYCLGSASDLLEVHKKPLQEVEIAAITHGALQGLAYLHSHTMIHRDIKAGNILLTEPGQVKLADFGSASMASPANSFVGTPYWMAPEVILAMDEGQYDGKVDVWSLGITCIELAERKPPLFNMNAMSALYHIAQNESPTLQSNEWSDYFRNFVDSCLQKIPQDRPTSEELLKHMFVLRERPETVLIDLIQRTKDAVRELDNLQYRKMKKLLFQEAHNGPAVEAQEEEEEQDHGVGRTGTVNSVGSNQSIPSMSISASSQSSSVNSLPDASDDKSELDMMEGDHTVMSNSSVIHLKPEEENYQEEGDPRTRASDPQSPPQVSRHKSHYRNREHFATIRTASLVTRQMQEHEQDSELREQMSGYKRMRRQHQKQLMTLENKLKAEMDEHRLRLDKDLETQRNNFAAEMEKLIKKHQAAMEKEAKVMANEEKKFQQHIQAQQKKELNSFLESQKREYKLRKEQLKEELNENQSTPKKEKQEWLSKQKENIQHFQAEEEANLLRRQRQYLELECRRFKRRMLLGRHNLEQDLVREELNKRQTQKDLEHAMLLRQHESMQELEFRHLNTIQKMRCELIRLQHQTELTNQLEYNKRRERELRRKHVMEVRQQPKSLKSKELQIKKQFQDTCKIQTRQYKALRNHLLETTPKSEHKAVLKRLKEEQTRKLAILAEQYDHSINEMLSTQALRLDEAQEAECQVLKMQLQQELELLNAYQSKIKMQAEAQHDRELRELEQRVSLRRALLEQKIEEEMLALQNERTERIRSLLERQAREIEAFDSESMRLGFSNMVLSNLSPEAFSHSYPGASSWSHNPTGGPGPHWGHPMGGTPQAWGHPMQGGPQPWGHPSGPMQGVPRGSSMGVRNSPQALRRTASGGRTEQGMSRSTSVTSQISNGSHMSYT.

Position 9 is a phosphoserine (serine 9). The region spanning 28 to 281 (FTDLREIGHG…SEELLKHMFV (254 aa)) is the Protein kinase domain. ATP contacts are provided by residues 34–42 (IGHGSFGAV) and lysine 57. Aspartate 151 functions as the Proton acceptor in the catalytic mechanism. Disordered stretches follow at residues 324–380 (PAVE…DKSE) and 404–433 (ENYQEEGDPRTRASDPQSPPQVSRHKSHYR). A compositionally biased stretch (low complexity) spans 350–370 (SNQSIPSMSISASSQSSSVNS). 2 positions are modified to phosphoserine: serine 421 and serine 445. Positions 458 to 651 (SELREQMSGY…QTQKDLEHAM (194 aa)) form a coiled coil. Residues 567-587 (KEELNENQSTPKKEKQEWLSK) are disordered. Over residues 577–587 (PKKEKQEWLSK) the composition is skewed to basic and acidic residues. A Phosphothreonine modification is found at threonine 669. Residues 754–877 (KAVLKRLKEE…LERQAREIEA (124 aa)) are a coiled coil. The segment at 905–1001 (PGASSWSHNP…ISNGSHMSYT (97 aa)) is disordered. The span at 921-930 (HWGHPMGGTP) shows a compositional bias: low complexity. Serine 965 carries the post-translational modification Phosphoserine. A compositionally biased stretch (polar residues) spans 975–1001 (GGRTEQGMSRSTSVTSQISNGSHMSYT).

It belongs to the protein kinase superfamily. STE Ser/Thr protein kinase family. STE20 subfamily. Self-associates. Interacts with MAP2K3. Interacts with SPRED1. Interacts with TESK1; the interaction inhibits TAOK1 kinase activity. Interacts with MAP3K7. Post-translationally, proteolytically processed by caspase-3 (CASP3). In terms of processing, autophosphorylated. Phosphorylated by ATM in response to DNA damage. Phosphorylated by LRRK2.

It localises to the cytoplasm. The enzyme catalyses L-seryl-[protein] + ATP = O-phospho-L-seryl-[protein] + ADP + H(+). It carries out the reaction L-threonyl-[protein] + ATP = O-phospho-L-threonyl-[protein] + ADP + H(+). Serine/threonine-protein kinase activity is inhibited by SPRED1. Serine/threonine-protein kinase involved in various processes such as p38/MAPK14 stress-activated MAPK cascade, DNA damage response and regulation of cytoskeleton stability. Phosphorylates MAP2K3, MAP2K6 and MARK2. Acts as an activator of the p38/MAPK14 stress-activated MAPK cascade by mediating phosphorylation and subsequent activation of the upstream MAP2K3 and MAP2K6 kinases. Involved in G-protein coupled receptor signaling to p38/MAPK14. In response to DNA damage, involved in the G2/M transition DNA damage checkpoint by activating the p38/MAPK14 stress-activated MAPK cascade, probably by mediating phosphorylation of MAP2K3 and MAP2K6. Acts as a regulator of cytoskeleton stability by phosphorylating 'Thr-208' of MARK2, leading to activate MARK2 kinase activity and subsequent phosphorylation and detachment of MAPT/TAU from microtubules. Also acts as a regulator of apoptosis: regulates apoptotic morphological changes, including cell contraction, membrane blebbing and apoptotic bodies formation via activation of the MAPK8/JNK cascade. During fetal development, it plays an essential role in the regulation of neuronal differentiation and migration to the cortical plate. This is Serine/threonine-protein kinase TAO1 (Taok1) from Mus musculus (Mouse).